The primary structure comprises 678 residues: Alpha-L-arabinofuranosidase 1 (678 aa).

Residues 1–33 (MDMESWKLLRSVCVLSFLLGSCFVYQSLRVVDA) form the signal peptide. One can recognise a CBM-cenC domain in the interval 152 to 239 (NIEEGKKYKV…WIDQVSAMPV (88 aa)). Residues asparagine 181, asparagine 362, asparagine 523, and asparagine 555 are each glycosylated (N-linked (GlcNAc...) asparagine).

The protein belongs to the glycosyl hydrolase 51 family. Expressed in roots, leaves, flowers, stems, siliques and seedlings. Observed in zones of cell proliferation, the vascular system and floral abscission zones. Expressed in the guard cells in stems, in xylem vessels and parenchyma cells surrounding the vessels, in the cambium and in the phloem, but not in the secondary xylem.

It is found in the secreted. The protein resides in the extracellular space. It localises to the extracellular matrix. It catalyses the reaction Hydrolysis of terminal non-reducing alpha-L-arabinofuranoside residues in alpha-L-arabinosides.. In terms of biological role, may be involved in the coordinated dissolution of the cell wall matrix during abscission and in the secondary cell wall formation in xylem vessels. Prefers arabinoxylan, but may also use pectic arabinans as substrates. The protein is Alpha-L-arabinofuranosidase 1 (ASD1) of Arabidopsis thaliana (Mouse-ear cress).